We begin with the raw amino-acid sequence, 625 residues long: tRNA uridine 5-carboxymethylaminomethyl modification enzyme MnmG (625 aa).

Residues 11–16, Val123, and Ser178 each bind FAD; that span reads GAGHAG. 271 to 285 is a binding site for NAD(+); the sequence is GPRYCPSIETKIVTF. Residue Gln368 participates in FAD binding.

Belongs to the MnmG family. In terms of assembly, homodimer. Heterotetramer of two MnmE and two MnmG subunits. FAD is required as a cofactor.

The protein resides in the cytoplasm. NAD-binding protein involved in the addition of a carboxymethylaminomethyl (cmnm) group at the wobble position (U34) of certain tRNAs, forming tRNA-cmnm(5)s(2)U34. This is tRNA uridine 5-carboxymethylaminomethyl modification enzyme MnmG from Bacteroides fragilis (strain YCH46).